The primary structure comprises 115 residues: Urease subunit beta (115 aa).

The protein belongs to the urease beta subunit family. In terms of assembly, heterotrimer of UreA (gamma), UreB (beta) and UreC (alpha) subunits. Three heterotrimers associate to form the active enzyme.

It localises to the cytoplasm. The enzyme catalyses urea + 2 H2O + H(+) = hydrogencarbonate + 2 NH4(+). Its pathway is nitrogen metabolism; urea degradation; CO(2) and NH(3) from urea (urease route): step 1/1. This is Urease subunit beta from Arthrobacter sp. (strain FB24).